The primary structure comprises 603 residues: MASEYLEHKLALLPDQPGCYLMKNANAQIIYVGKAKNLKNRVRSYFKSSHTGKVAAMVEEVADFETIVTSSNKESFLLEITLIQKHQPYYNIKLKRGTGYPYIKITNERDPIIKITGQVKKDGAYYFGPYPNVYAAEETVHFIQKVFPLRRCHGYQGRPCLYYHLGQCLGCCFKEVPEEEYAVQTKRIKSFLNGNTAQVKKQLTARMERAAGQLEFERAAEIRDQLHYIEVTVEKQKIISNDKTPRDLFNFYLDKGWLSIQVFFIRQARLMKREKRLFPVVDTAEEEMTSFILQFYNRRNKLLPKEILLPEGLPNQEIEEILGVPVRTPQRGEKRDLLDMAKENAILSLNEKFRLLEMDRQKTTGAMKEITDELGLPTGHVIEAFDHSHIQGADPVSAMVVFVNGEPAKKLYRKYKLTTVVDHADEAASTREVIFRRYSRLLKEEKPMPDMIMMDGGPIQMEAAKDVLENQLGLNIPVIGMVKNDKHQTADLLYGDDAHHVNLDPRSQGFYLVQRIQDEVHRFAITYHRKVHTKHSLSSRLDEIHGVGPRTRNKLLKAFGSINKIAVAPVEEIRALGINQTTAQLIKVSLQGQAEVKKGSSHD.

One can recognise a GIY-YIG domain in the interval 15–92; it reads DQPGCYLMKN…IQKHQPYYNI (78 aa). The UVR domain maps to 197–232; sequence AQVKKQLTARMERAAGQLEFERAAEIRDQLHYIEVT.

This sequence belongs to the UvrC family. Interacts with UvrB in an incision complex.

It is found in the cytoplasm. Functionally, the UvrABC repair system catalyzes the recognition and processing of DNA lesions. UvrC both incises the 5' and 3' sides of the lesion. The N-terminal half is responsible for the 3' incision and the C-terminal half is responsible for the 5' incision. This Limosilactobacillus fermentum (strain NBRC 3956 / LMG 18251) (Lactobacillus fermentum) protein is UvrABC system protein C.